A 639-amino-acid chain; its full sequence is Threonine--tRNA ligase (639 aa).

A TGS domain is found at 1–61 (MIKVALKDGS…DTDCDLNLFK (61 aa)). The tract at residues 242–532 (DHRKLGKELG…LIEHYAGKFP (291 aa)) is catalytic. Zn(2+)-binding residues include C333, H384, and H509.

Belongs to the class-II aminoacyl-tRNA synthetase family. Homodimer. The cofactor is Zn(2+).

The protein localises to the cytoplasm. It catalyses the reaction tRNA(Thr) + L-threonine + ATP = L-threonyl-tRNA(Thr) + AMP + diphosphate + H(+). Functionally, catalyzes the attachment of threonine to tRNA(Thr) in a two-step reaction: L-threonine is first activated by ATP to form Thr-AMP and then transferred to the acceptor end of tRNA(Thr). Also edits incorrectly charged L-seryl-tRNA(Thr). The polypeptide is Threonine--tRNA ligase (Clostridioides difficile (strain 630) (Peptoclostridium difficile)).